Reading from the N-terminus, the 383-residue chain is Probable butyrate kinase (383 aa).

The protein belongs to the acetokinase family.

It is found in the cytoplasm. The enzyme catalyses butanoate + ATP = butanoyl phosphate + ADP. The sequence is that of Probable butyrate kinase from Deinococcus radiodurans (strain ATCC 13939 / DSM 20539 / JCM 16871 / CCUG 27074 / LMG 4051 / NBRC 15346 / NCIMB 9279 / VKM B-1422 / R1).